A 219-amino-acid chain; its full sequence is Elongation factor Ts (219 aa).

Residues 82 to 85 (TDFV) are involved in Mg(2+) ion dislocation from EF-Tu.

The protein belongs to the EF-Ts family.

It localises to the cytoplasm. Its function is as follows. Associates with the EF-Tu.GDP complex and induces the exchange of GDP to GTP. It remains bound to the aminoacyl-tRNA.EF-Tu.GTP complex up to the GTP hydrolysis stage on the ribosome. The sequence is that of Elongation factor Ts from Anaeromyxobacter sp. (strain Fw109-5).